Here is a 43-residue protein sequence, read N- to C-terminus: Iota-conotoxin-like S11.2 (43 aa).

4 disulfides stabilise this stretch: cysteine 2–cysteine 16, cysteine 9–cysteine 19, cysteine 15–cysteine 24, and cysteine 18–cysteine 35. Methionine 41 is modified (D-methionine). Residue arginine 43 is a propeptide, removed by a carboxypeptidase.

Belongs to the conotoxin I1 superfamily. In terms of tissue distribution, expressed by the venom duct.

It localises to the secreted. In terms of biological role, iota-conotoxins bind to voltage-gated sodium channels (Nav) and act as agonists by shifting the voltage-dependence of activation to more hyperpolarized levels. Produces general excitatory symptoms. This chain is Iota-conotoxin-like S11.2, found in Conus striatus (Striated cone).